The sequence spans 326 residues: Glyoxylate/hydroxypyruvate reductase B (326 aa).

Catalysis depends on residues R237 and E266. The active-site Proton donor is the H285.

This sequence belongs to the D-isomer specific 2-hydroxyacid dehydrogenase family. GhrB subfamily. Homodimer.

It is found in the cytoplasm. It catalyses the reaction glycolate + NADP(+) = glyoxylate + NADPH + H(+). It carries out the reaction (R)-glycerate + NAD(+) = 3-hydroxypyruvate + NADH + H(+). The enzyme catalyses (R)-glycerate + NADP(+) = 3-hydroxypyruvate + NADPH + H(+). In terms of biological role, catalyzes the NADPH-dependent reduction of glyoxylate and hydroxypyruvate into glycolate and glycerate, respectively. This Yersinia pseudotuberculosis serotype O:3 (strain YPIII) protein is Glyoxylate/hydroxypyruvate reductase B.